Consider the following 442-residue polypeptide: Probable glycine dehydrogenase (decarboxylating) subunit 1 (442 aa).

The protein belongs to the GcvP family. N-terminal subunit subfamily. The glycine cleavage system is composed of four proteins: P, T, L and H. In this organism, the P 'protein' is a heterodimer of two subunits.

It carries out the reaction N(6)-[(R)-lipoyl]-L-lysyl-[glycine-cleavage complex H protein] + glycine + H(+) = N(6)-[(R)-S(8)-aminomethyldihydrolipoyl]-L-lysyl-[glycine-cleavage complex H protein] + CO2. In terms of biological role, the glycine cleavage system catalyzes the degradation of glycine. The P protein binds the alpha-amino group of glycine through its pyridoxal phosphate cofactor; CO(2) is released and the remaining methylamine moiety is then transferred to the lipoamide cofactor of the H protein. The chain is Probable glycine dehydrogenase (decarboxylating) subunit 1 from Geotalea uraniireducens (strain Rf4) (Geobacter uraniireducens).